Here is an 89-residue protein sequence, read N- to C-terminus: Small ribosomal subunit protein uS14A (89 aa).

The protein belongs to the universal ribosomal protein uS14 family. As to quaternary structure, part of the 30S ribosomal subunit. Contacts proteins S3 and S10.

In terms of biological role, binds 16S rRNA, required for the assembly of 30S particles and may also be responsible for determining the conformation of the 16S rRNA at the A site. This is Small ribosomal subunit protein uS14A from Streptococcus equi subsp. zooepidemicus (strain MGCS10565).